Here is a 589-residue protein sequence, read N- to C-terminus: Transcription factor 4 (589 aa).

Disordered stretches follow at residues 1 to 124, 138 to 163, 184 to 239, 254 to 297, 384 to 492, and 556 to 589; these read MTSR…SSSK, DGHH…MLGN, PSHS…SQTG, HTNN…EGPL, SLLP…MANN, and KRRE…MGQM. Phosphoserine occurs at positions 8 and 13. The segment covering 56-74 has biased composition (polar residues); that stretch reads GTLSPTKPGSQYYPYSSNN. Residues 136–157 are leucine-zipper; the sequence is MQDGHHSSDPWSSSSGMNQPGY. Polar residues predominate over residues 184-224; that stretch reads PSHSSADINSSLPPMSTFHRSGTNHYSTSSCTPPANGTDSI. Positions 255–266 are enriched in low complexity; that stretch reads TNNSFSSNPSTP. The span at 283–292 shows a compositional bias: polar residues; the sequence is NGGQASSSPN. Ser290 carries the post-translational modification Phosphoserine. The class A specific domain stretch occupies residues 380-403; that stretch reads RGSHSLLPNQVPVPQLPVQSATSP. Low complexity-rich tracts occupy residues 385 to 398 and 421 to 430; these read LLPN…LPVQ and GQSVSSGSSE. Ser433 is subject to Phosphoserine. 2 stretches are compositionally biased toward basic and acidic residues: residues 445–461 and 477–492; these read KSSE…DIKS and PEQK…MANN. The bHLH domain maps to 486-539; the sequence is ERRMANNARERLRVRDINEAFKELGRMVQLHLKSDKPQTKLLILHQAVAVILSL.

As to quaternary structure, efficient DNA binding requires dimerization with another bHLH protein. Forms homo- or heterooligomers with myogenin. Interacts with HIVEP2. Interacts with NEUROD2. Interacts with AGBL1.

It localises to the nucleus. In terms of biological role, transcription factor that binds to the immunoglobulin enhancer Mu-E5/KE5-motif. Involved in the initiation of neuronal differentiation. Activates transcription by binding to the E box (5'-CANNTG-3'). Binds to the E-box present in the somatostatin receptor 2 initiator element (SSTR2-INR) to activate transcription. Interacts with the CCAAT displacement protein (CDP2) to bind the tyrosine hydroxylase enhancer. In Rattus norvegicus (Rat), this protein is Transcription factor 4 (Tcf4).